A 103-amino-acid polypeptide reads, in one-letter code: Small ribosomal subunit protein uS10 (103 aa).

The protein belongs to the universal ribosomal protein uS10 family. In terms of assembly, part of the 30S ribosomal subunit.

Involved in the binding of tRNA to the ribosomes. The polypeptide is Small ribosomal subunit protein uS10 (Hahella chejuensis (strain KCTC 2396)).